The primary structure comprises 326 residues: G-protein coupled receptor 171 (326 aa).

Over 1–19 the chain is Extracellular; it reads MTNSSMFCPIYRDLEPFTY. A helical transmembrane segment spans residues 20 to 40; the sequence is FFYLVYLIGIIGSCFATWAFI. Residues 41–48 lie on the Cytoplasmic side of the membrane; the sequence is QKSTNHRC. Residues 49–69 traverse the membrane as a helical segment; it reads VSIYLINLLTADFLLTLALPV. The Extracellular segment spans residues 70–89; the sequence is KIVVDLGVAPWKLRIFHCQV. A disulfide bridge links Cys-87 with Cys-165. The helical transmembrane segment at 90–110 threads the bilayer; it reads TACLIYINMYLSIIFLAFVSI. Topologically, residues 111–133 are cytoplasmic; that stretch reads DRCLQLVHSCKIYRIQEPGFAKM. A helical membrane pass occupies residues 134–154; the sequence is ISAVVWLMVLLIMVPNMVIPI. The Extracellular segment spans residues 155–182; the sequence is KNIKEKSNVGCMEFKREFGKNWHLLTNF. The helical transmembrane segment at 183–203 threads the bilayer; the sequence is ICVAIFLNFSAIILISNFLVI. Residues 204–221 lie on the Cytoplasmic side of the membrane; it reads RQLYRNRDNANYPSVKSA. Residues 222 to 242 form a helical membrane-spanning segment; sequence LLNILLVTASYIICFVPYHAV. At 243–268 the chain is on the extracellular side; that stretch reads RIPYTLSQTEVISDCSTRIALFKAKE. Residues 269–289 form a helical membrane-spanning segment; the sequence is ATLLLAVSNLCFDPILYYHLS. Residues 290-326 lie on the Cytoplasmic side of the membrane; that stretch reads KAFRLKVTETFASPQKMKAREEKPRRENDVQSTGSAC. A disordered region spans residues 305–326; the sequence is KMKAREEKPRRENDVQSTGSAC. Positions 307–318 are enriched in basic and acidic residues; sequence KAREEKPRREND.

Belongs to the G-protein coupled receptor 1 family.

Its subcellular location is the cell membrane. In terms of biological role, G-protein coupled receptor for Big LEN, a 16-amino acid neuropeptide produced from the precursor protein, proSAAS (encoded by PCSK1N). Acts through a G(i)-alpha-mediated pathway in response to Big LEN. Big LEN-GPR171 system plays an important role in regulating feeding and metabolism. Also plays a role in modulating fear and anxiety-like behaviors in the basolateral amygdala. Big LEN-GPR171 modulates the mu-type opioid receptor signaling and antinociception. Acts as a negative regulator T cell function. The protein is G-protein coupled receptor 171 of Rattus norvegicus (Rat).